A 364-amino-acid chain; its full sequence is uncharacterized protein (364 aa).

This is an uncharacterized protein from Saccharum officinarum (Sugarcane).